Reading from the N-terminus, the 301-residue chain is Ribosomal RNA small subunit methyltransferase H (301 aa).

S-adenosyl-L-methionine-binding positions include 35 to 37 (GGH), Asp55, Phe84, Asp105, and Gln112.

Belongs to the methyltransferase superfamily. RsmH family.

The protein localises to the cytoplasm. It carries out the reaction cytidine(1402) in 16S rRNA + S-adenosyl-L-methionine = N(4)-methylcytidine(1402) in 16S rRNA + S-adenosyl-L-homocysteine + H(+). In terms of biological role, specifically methylates the N4 position of cytidine in position 1402 (C1402) of 16S rRNA. This chain is Ribosomal RNA small subunit methyltransferase H, found in Chloroflexus aggregans (strain MD-66 / DSM 9485).